Here is a 219-residue protein sequence, read N- to C-terminus: Octanoyltransferase (219 aa).

A BPL/LPL catalytic domain is found at 34-209 (SESPDELWIV…TFSQLLGYQH (176 aa)). Substrate-binding positions include 73–80 (RGGQVTYH), 140–142 (SLG), and 153–155 (GLA). Cysteine 171 serves as the catalytic Acyl-thioester intermediate.

Belongs to the LipB family.

It is found in the cytoplasm. It catalyses the reaction octanoyl-[ACP] + L-lysyl-[protein] = N(6)-octanoyl-L-lysyl-[protein] + holo-[ACP] + H(+). It functions in the pathway protein modification; protein lipoylation via endogenous pathway; protein N(6)-(lipoyl)lysine from octanoyl-[acyl-carrier-protein]: step 1/2. Catalyzes the transfer of endogenously produced octanoic acid from octanoyl-acyl-carrier-protein onto the lipoyl domains of lipoate-dependent enzymes. Lipoyl-ACP can also act as a substrate although octanoyl-ACP is likely to be the physiological substrate. The chain is Octanoyltransferase from Shewanella putrefaciens (strain CN-32 / ATCC BAA-453).